The primary structure comprises 237 residues: DCN1-like protein 5 (237 aa).

A phosphoserine mark is found at serine 9, serine 41, and serine 48. The DCUN1 domain occupies 46–232; it reads FSSKKCLAWF…LLDEFVEWQK (187 aa).

As to quaternary structure, part of a complex that contains DCUN1D5, CUL1 and RBX1; this interaction is bridged by CUL1. Interacts (via the DCUN1 domain) with the unneddylated cullins: interacts with CUL1, CUL2, CUL3, CUL4A, CUL4B and CUL5; these interactions promote the cullin neddylation and the identity of the cullin dictates the affinity of the interaction. Interacts (via DCUN1 domain) with UBE2M (N-terminally acetylated form) and probably with UBE2F (N-terminally acetylated form). May also interact with regulators or subunits of cullin-RING ligases such as RBX1, RNF7, ELOB and DDB1; these interactions are bridged by cullins. Interacts with CAND1; this interaction is bridged by cullins and strongly inhibits the neddylation of cullins. These CAND-cullin-DCNL complexes can only be neddylated in the presence of a substrate adapter. In terms of processing, phosphorylation at Ser-41 is independent of cullin's interaction. Phosphorylated in response to both TICAM1 and MYD88 dependent Toll-like receptor (TLR) pathway activation. Phosphorylated in response to IL1B stimulation. In terms of tissue distribution, weakly expressed in testis, skin and immune tissues (thymus, spleen and lymph nodes).

Its subcellular location is the nucleus. The protein localises to the cytoplasm. It is found in the cytoskeleton. The protein resides in the spindle. Functionally, contributes to the neddylation of all cullins by transferring NEDD8 from N-terminally acetylated NEDD8-conjugating E2s enzyme to different cullin C-terminal domain-RBX complexes which is necessary for the activation of cullin-RING E3 ubiquitin ligases (CRLs). May play a role in DNA damage response and may participate in cell proliferation and anchorage-independent cell growth. The polypeptide is DCN1-like protein 5 (Homo sapiens (Human)).